Reading from the N-terminus, the 491-residue chain is Glycogen synthase 2 (491 aa).

Lys16 serves as a coordination point for ADP-alpha-D-glucose.

This sequence belongs to the glycosyltransferase 1 family. Bacterial/plant glycogen synthase subfamily.

The catalysed reaction is [(1-&gt;4)-alpha-D-glucosyl](n) + ADP-alpha-D-glucose = [(1-&gt;4)-alpha-D-glucosyl](n+1) + ADP + H(+). Its pathway is glycan biosynthesis; glycogen biosynthesis. In terms of biological role, synthesizes alpha-1,4-glucan chains using ADP-glucose. The protein is Glycogen synthase 2 of Nitrosococcus oceani (strain ATCC 19707 / BCRC 17464 / JCM 30415 / NCIMB 11848 / C-107).